The sequence spans 185 residues: Ribosome-recycling factor (185 aa).

Belongs to the RRF family.

The protein resides in the cytoplasm. Its function is as follows. Responsible for the release of ribosomes from messenger RNA at the termination of protein biosynthesis. May increase the efficiency of translation by recycling ribosomes from one round of translation to another. This is Ribosome-recycling factor from Wolbachia pipientis subsp. Culex pipiens (strain wPip).